Here is a 267-residue protein sequence, read N- to C-terminus: Phosphatidylglycerol--prolipoprotein diacylglyceryl transferase (267 aa).

4 helical membrane-spanning segments follow: residues 10–30 (VAIALGPFKVHWYGLMYVVGF), 54–74 (LLFYGALGVVLGGRVGYALFY), 90–110 (WDGGMSFHGGLIGVLIAAWLF), and 116–136 (LAFFQLTDFVAPLVPLGLGAG). R137 is an a 1,2-diacyl-sn-glycero-3-phospho-(1'-sn-glycerol) binding site. 3 consecutive transmembrane segments (helical) span residues 169-189 (PSPLYEFALEGVVMFVVLWWV), 197-217 (GMISGLFLLLYAVFRFSVEFV), and 231-251 (WLTMGQLLTVPMALAGIALCV).

The protein belongs to the Lgt family.

The protein resides in the cell inner membrane. The enzyme catalyses L-cysteinyl-[prolipoprotein] + a 1,2-diacyl-sn-glycero-3-phospho-(1'-sn-glycerol) = an S-1,2-diacyl-sn-glyceryl-L-cysteinyl-[prolipoprotein] + sn-glycerol 1-phosphate + H(+). The protein operates within protein modification; lipoprotein biosynthesis (diacylglyceryl transfer). Its function is as follows. Catalyzes the transfer of the diacylglyceryl group from phosphatidylglycerol to the sulfhydryl group of the N-terminal cysteine of a prolipoprotein, the first step in the formation of mature lipoproteins. The sequence is that of Phosphatidylglycerol--prolipoprotein diacylglyceryl transferase from Chromohalobacter salexigens (strain ATCC BAA-138 / DSM 3043 / CIP 106854 / NCIMB 13768 / 1H11).